Consider the following 380-residue polypeptide: Ankyrin repeat domain-containing protein 63 (380 aa).

ANK repeat units follow at residues 11 to 40 (AGTR…RSII), 46 to 79 (QGRT…AVNL), 83 to 112 (RGRT…DPEA), 116 to 145 (AGNS…RLGL), and 153 to 182 (AGLT…RAAA). 2 stretches are compositionally biased toward low complexity: residues 181 to 203 (AAAA…PAAS) and 216 to 226 (RPLLARFARAA). Residues 181 to 256 (AAAAAARGSN…GSERPELGRS (76 aa)) are disordered. Position 193 is a phosphoserine (Ser193). Ser294 is subject to Phosphoserine. The tract at residues 309 to 368 (PIGLSPHPEGGPGSGRLGLRRRSTAPDIPSLVGEAPGPESGPELEANALSVSVPGPNPWQ) is disordered.

This Homo sapiens (Human) protein is Ankyrin repeat domain-containing protein 63.